We begin with the raw amino-acid sequence, 224 residues long: Synaptogyrin-2 (224 aa).

Met-1 carries the post-translational modification N-acetylmethionine. Ser-3 bears the Phosphoserine mark. One can recognise an MARVEL domain in the interval 20–171 (FLTQPQVVAR…LASLAYQRYK (152 aa)). 4 helical membrane passes run 26 to 46 (VVAR…IYGE), 73 to 93 (AIGV…AYFP), 105 to 125 (VIGD…GFCF), and 147 to 167 (AAIT…SLAY).

This sequence belongs to the synaptogyrin family. In terms of assembly, (Microbial infection) Interacts with SFTS phlebovirus protein NSs; may be involved in virus replication. May be tyrosine phosphorylated by Src. As to expression, ubiquitous; low expression in brain.

The protein localises to the cytoplasmic vesicle membrane. It localises to the cytoplasmic vesicle. It is found in the secretory vesicle. The protein resides in the synaptic vesicle membrane. Its subcellular location is the lipid droplet. Functionally, may play a role in regulated exocytosis. In neuronal cells, modulates the localization of synaptophysin/SYP into synaptic-like microvesicles and may therefore play a role in the formation and/or the maturation of this vesicles. May also play a role in GLUT4 storage and transport to the plasma membrane. In terms of biological role, (Microbial infection) May play a role in the assembly of cytoplasmic inclusion bodies required for SFTS phlebovirus replication. The polypeptide is Synaptogyrin-2 (Homo sapiens (Human)).